A 162-amino-acid chain; its full sequence is D-aminoacyl-tRNA deacylase (162 aa).

The Gly-cisPro motif, important for rejection of L-amino acids motif lies at 145–146; the sequence is GP.

This sequence belongs to the DTD family. In terms of assembly, homodimer.

It is found in the cytoplasm. The enzyme catalyses glycyl-tRNA(Ala) + H2O = tRNA(Ala) + glycine + H(+). The catalysed reaction is a D-aminoacyl-tRNA + H2O = a tRNA + a D-alpha-amino acid + H(+). Its function is as follows. An aminoacyl-tRNA editing enzyme that deacylates mischarged D-aminoacyl-tRNAs. Also deacylates mischarged glycyl-tRNA(Ala), protecting cells against glycine mischarging by AlaRS. Acts via tRNA-based rather than protein-based catalysis; rejects L-amino acids rather than detecting D-amino acids in the active site. By recycling D-aminoacyl-tRNA to D-amino acids and free tRNA molecules, this enzyme counteracts the toxicity associated with the formation of D-aminoacyl-tRNA entities in vivo and helps enforce protein L-homochirality. This is D-aminoacyl-tRNA deacylase from Bifidobacterium longum (strain DJO10A).